The sequence spans 382 residues: D-galactonate dehydratase (382 aa).

Asp-183 is a Mg(2+) binding site. Catalysis depends on His-185, which acts as the Proton donor. Mg(2+)-binding residues include Glu-209 and Glu-235. His-285 serves as the catalytic Proton acceptor. Residues 361 to 382 (NENPPDWRNPVWRHSDGSIAEW) form a disordered region.

It belongs to the mandelate racemase/muconate lactonizing enzyme family. GalD subfamily. Requires Mg(2+) as cofactor.

The catalysed reaction is D-galactonate = 2-dehydro-3-deoxy-D-galactonate + H2O. It participates in carbohydrate acid metabolism; D-galactonate degradation; D-glyceraldehyde 3-phosphate and pyruvate from D-galactonate: step 1/3. In terms of biological role, catalyzes the dehydration of D-galactonate to 2-keto-3-deoxy-D-galactonate. The polypeptide is D-galactonate dehydratase (Xanthomonas oryzae pv. oryzae (strain MAFF 311018)).